The sequence spans 160 residues: Nucleotide-binding protein PSHAa2277 (160 aa).

This sequence belongs to the YajQ family.

Nucleotide-binding protein. In Pseudoalteromonas translucida (strain TAC 125), this protein is Nucleotide-binding protein PSHAa2277.